The chain runs to 475 residues: Ribulose bisphosphate carboxylase large chain (475 aa).

Positions 1 to 2 are excised as a propeptide; it reads MS. Pro3 carries the post-translational modification N-acetylproline. Position 14 is an N6,N6,N6-trimethyllysine (Lys14). Substrate contacts are provided by Asn123 and Thr173. Lys175 serves as the catalytic Proton acceptor. Lys177 is a substrate binding site. Mg(2+) is bound by residues Lys201, Asp203, and Glu204. Residue Lys201 is modified to N6-carboxylysine. Residue His294 is the Proton acceptor of the active site. The substrate site is built by Arg295, His327, and Ser379.

It belongs to the RuBisCO large chain family. Type I subfamily. Heterohexadecamer of 8 large chains and 8 small chains; disulfide-linked. The disulfide link is formed within the large subunit homodimers. The cofactor is Mg(2+). The disulfide bond which can form in the large chain dimeric partners within the hexadecamer appears to be associated with oxidative stress and protein turnover.

It is found in the plastid. The protein resides in the chloroplast. The enzyme catalyses 2 (2R)-3-phosphoglycerate + 2 H(+) = D-ribulose 1,5-bisphosphate + CO2 + H2O. It catalyses the reaction D-ribulose 1,5-bisphosphate + O2 = 2-phosphoglycolate + (2R)-3-phosphoglycerate + 2 H(+). Its function is as follows. RuBisCO catalyzes two reactions: the carboxylation of D-ribulose 1,5-bisphosphate, the primary event in carbon dioxide fixation, as well as the oxidative fragmentation of the pentose substrate in the photorespiration process. Both reactions occur simultaneously and in competition at the same active site. The protein is Ribulose bisphosphate carboxylase large chain of Physcomitrium patens (Spreading-leaved earth moss).